Here is a 320-residue protein sequence, read N- to C-terminus: Cytochrome f (320 aa).

An N-terminal signal peptide occupies residues 1-35; sequence MQTINTFSWIKEQITRSISISLILYIITRSSIANA. Heme contacts are provided by Y36, C56, C59, and H60. Residues 286 to 305 form a helical membrane-spanning segment; the sequence is IQGLLFFFASVILAQIFLVL.

This sequence belongs to the cytochrome f family. In terms of assembly, the 4 large subunits of the cytochrome b6-f complex are cytochrome b6, subunit IV (17 kDa polypeptide, petD), cytochrome f and the Rieske protein, while the 4 small subunits are PetG, PetL, PetM and PetN. The complex functions as a dimer. The cofactor is heme.

The protein localises to the plastid. It localises to the chloroplast thylakoid membrane. Its function is as follows. Component of the cytochrome b6-f complex, which mediates electron transfer between photosystem II (PSII) and photosystem I (PSI), cyclic electron flow around PSI, and state transitions. The protein is Cytochrome f (petA) of Spinacia oleracea (Spinach).